We begin with the raw amino-acid sequence, 232 residues long: Large ribosomal subunit protein uL1 (232 aa).

The protein belongs to the universal ribosomal protein uL1 family. As to quaternary structure, part of the 50S ribosomal subunit.

In terms of biological role, binds directly to 23S rRNA. The L1 stalk is quite mobile in the ribosome, and is involved in E site tRNA release. Protein L1 is also a translational repressor protein, it controls the translation of the L11 operon by binding to its mRNA. This chain is Large ribosomal subunit protein uL1, found in Francisella tularensis subsp. holarctica (strain LVS).